Consider the following 636-residue polypeptide: 1-deoxy-D-xylulose-5-phosphate synthase 2 (636 aa).

Thiamine diphosphate is bound by residues histidine 78 and 119-121 (AHS). Residue aspartate 150 participates in Mg(2+) binding. Thiamine diphosphate-binding positions include 151-152 (GS), asparagine 179, tyrosine 288, and glutamate 370. Position 179 (asparagine 179) interacts with Mg(2+).

Belongs to the transketolase family. DXPS subfamily. Homodimer. The cofactor is Mg(2+). Requires thiamine diphosphate as cofactor.

It catalyses the reaction D-glyceraldehyde 3-phosphate + pyruvate + H(+) = 1-deoxy-D-xylulose 5-phosphate + CO2. It functions in the pathway metabolic intermediate biosynthesis; 1-deoxy-D-xylulose 5-phosphate biosynthesis; 1-deoxy-D-xylulose 5-phosphate from D-glyceraldehyde 3-phosphate and pyruvate: step 1/1. Its function is as follows. Catalyzes the acyloin condensation reaction between C atoms 2 and 3 of pyruvate and glyceraldehyde 3-phosphate to yield 1-deoxy-D-xylulose-5-phosphate (DXP). The protein is 1-deoxy-D-xylulose-5-phosphate synthase 2 of Jannaschia sp. (strain CCS1).